Reading from the N-terminus, the 518-residue chain is 2-isopropylmalate synthase (518 aa).

In terms of domain architecture, Pyruvate carboxyltransferase spans 5–267 (VIIFDTTLRD…STNIKHKEIY (263 aa)). Mn(2+) is bound by residues aspartate 14, histidine 202, histidine 204, and asparagine 238. Residues 392–518 (SLSFFSVQSI…KLKTLKKVNN (127 aa)) are regulatory domain.

Belongs to the alpha-IPM synthase/homocitrate synthase family. LeuA type 1 subfamily. Homodimer. It depends on Mn(2+) as a cofactor.

It localises to the cytoplasm. The enzyme catalyses 3-methyl-2-oxobutanoate + acetyl-CoA + H2O = (2S)-2-isopropylmalate + CoA + H(+). It participates in amino-acid biosynthesis; L-leucine biosynthesis; L-leucine from 3-methyl-2-oxobutanoate: step 1/4. Its function is as follows. Catalyzes the condensation of the acetyl group of acetyl-CoA with 3-methyl-2-oxobutanoate (2-ketoisovalerate) to form 3-carboxy-3-hydroxy-4-methylpentanoate (2-isopropylmalate). In Buchnera aphidicola subsp. Schizaphis graminum (strain Sg), this protein is 2-isopropylmalate synthase.